A 201-amino-acid chain; its full sequence is Small ribosomal subunit protein uS4 (201 aa).

The interval 26-47 (LSKKNYPPGQHGNNRRRKTSEY) is disordered. An S4 RNA-binding domain is found at 92-154 (ARLDNVVFRL…SKSLEVIADA (63 aa)).

The protein belongs to the universal ribosomal protein uS4 family. Part of the 30S ribosomal subunit. Contacts protein S5. The interaction surface between S4 and S5 is involved in control of translational fidelity.

One of the primary rRNA binding proteins, it binds directly to 16S rRNA where it nucleates assembly of the body of the 30S subunit. Functionally, with S5 and S12 plays an important role in translational accuracy. In Porphyromonas gingivalis (strain ATCC 33277 / DSM 20709 / CIP 103683 / JCM 12257 / NCTC 11834 / 2561), this protein is Small ribosomal subunit protein uS4.